Reading from the N-terminus, the 441-residue chain is tRNA modification GTPase MnmE (441 aa).

Residues Arg-21, Glu-78, and Lys-117 each coordinate (6S)-5-formyl-5,6,7,8-tetrahydrofolate. In terms of domain architecture, TrmE-type G spans 211–363 (GIVMTIVGKP…LENKIVSKVK (153 aa)). Asn-221 provides a ligand contact to K(+). GTP contacts are provided by residues 221–226 (NSGKST), 240–246 (TDIPGTT), and 265–268 (DTAG). A Mg(2+)-binding site is contributed by Ser-225. Positions 240, 242, and 245 each coordinate K(+). Thr-246 lines the Mg(2+) pocket. Lys-441 is a binding site for (6S)-5-formyl-5,6,7,8-tetrahydrofolate.

It belongs to the TRAFAC class TrmE-Era-EngA-EngB-Septin-like GTPase superfamily. TrmE GTPase family. Homodimer. Heterotetramer of two MnmE and two MnmG subunits. K(+) is required as a cofactor.

It is found in the cytoplasm. Its function is as follows. Exhibits a very high intrinsic GTPase hydrolysis rate. Involved in the addition of a carboxymethylaminomethyl (cmnm) group at the wobble position (U34) of certain tRNAs, forming tRNA-cmnm(5)s(2)U34. The polypeptide is tRNA modification GTPase MnmE (Thermosipho melanesiensis (strain DSM 12029 / CIP 104789 / BI429)).